The primary structure comprises 172 residues: Macro domain-containing protein CT2219 (172 aa).

The Macro domain occupies 1–172 (MPDNVLIHAI…DVYQKALAAG (172 aa)).

Belongs to the MacroD-type family.

The chain is Macro domain-containing protein CT2219 from Chlorobaculum tepidum (strain ATCC 49652 / DSM 12025 / NBRC 103806 / TLS) (Chlorobium tepidum).